Consider the following 94-residue polypeptide: Co-chaperonin GroES (94 aa).

Belongs to the GroES chaperonin family. In terms of assembly, heptamer of 7 subunits arranged in a ring. Interacts with the chaperonin GroEL.

It localises to the cytoplasm. Its function is as follows. Together with the chaperonin GroEL, plays an essential role in assisting protein folding. The GroEL-GroES system forms a nano-cage that allows encapsulation of the non-native substrate proteins and provides a physical environment optimized to promote and accelerate protein folding. GroES binds to the apical surface of the GroEL ring, thereby capping the opening of the GroEL channel. This chain is Co-chaperonin GroES, found in Geobacillus thermodenitrificans (strain NG80-2).